The sequence spans 1058 residues: Ubiquitin-like modifier-activating enzyme 1 (1058 aa).

Positions 1-46 (MSSSPLSKKRRVSGPDPKPGSNCSPAQSALSEVSSVPTNGMAKNGS) are disordered. Residue Ser-2 is modified to N-acetylserine. Phosphoserine occurs at positions 4, 13, 21, 24, and 46. The segment covering 21–38 (SNCSPAQSALSEVSSVPT) has biased composition (polar residues). Tyr-55 is subject to Phosphotyrosine. Repeat copies occupy residues 63–199 (GHEA…GQLF) and 459–611 (GSDF…QVVI). The segment at 63 to 611 (GHEAMKMLQT…GTKGNVQVVI (549 aa)) is 2 approximate repeats. ATP-binding positions include Ala-478, Asp-504, Arg-515, Lys-528, and 576–577 (DN). Lys-528 bears the N6-succinyllysine mark. Cys-632 serves as the catalytic Glycyl thioester intermediate. Residue Lys-671 is modified to N6-acetyllysine. Thr-800 carries the post-translational modification Phosphothreonine. Residues Ser-810, Ser-816, Ser-820, and Ser-835 each carry the phosphoserine modification. Lys-980 is modified (N6-acetyllysine).

It belongs to the ubiquitin-activating E1 family. In terms of assembly, monomer. Interacts with GAN (via BTB domain). ISGylated. As to expression, ubiquitously expressed. In testis, expressed in A spermatogonia and spermatids but at very low levels in pachytene spermatocytes.

It localises to the cytoplasm. Its subcellular location is the mitochondrion. It is found in the nucleus. The enzyme catalyses ATP + ubiquitin + [E1 ubiquitin-activating enzyme]-L-cysteine = AMP + diphosphate + S-ubiquitinyl-[E1 ubiquitin-activating enzyme]-L-cysteine.. It participates in protein modification; protein ubiquitination. In terms of biological role, catalyzes the first step in ubiquitin conjugation to mark cellular proteins for degradation through the ubiquitin-proteasome system. Activates ubiquitin by first adenylating its C-terminal glycine residue with ATP, and thereafter linking this residue to the side chain of a cysteine residue in E1, yielding a ubiquitin-E1 thioester and free AMP. Essential for the formation of radiation-induced foci, timely DNA repair and for response to replication stress. Promotes the recruitment of TP53BP1 and BRCA1 at DNA damage sites. This chain is Ubiquitin-like modifier-activating enzyme 1 (Uba1), found in Mus musculus (Mouse).